A 399-amino-acid polypeptide reads, in one-letter code: Lysosomal acid lipase/cholesteryl ester hydrolase (399 aa).

Residues 1–27 form the signal peptide; sequence MKMRFLGLVVCLVLWTLHSEASGGKLT. The propeptide at 28–76 is removed in mature form; it reads AVNPETNMNVSEIISYWGFPSEEYLVETEDGYILCLNRIPHGRKNHSDK. Residues N36, N72, N101, and N161 are each glycosylated (N-linked (GlcNAc...) asparagine). In terms of domain architecture, AB hydrolase-1 spans 80-380; it reads PVVFLQHGLL…EWEHLDFIWG (301 aa). S174 (charge relay system) is an active-site residue. N-linked (GlcNAc...) asparagine glycosylation is found at N273 and N321. Catalysis depends on H374, which acts as the Charge relay system.

The protein belongs to the AB hydrolase superfamily. Lipase family. In terms of assembly, monomer. Glycosylation is not essential for catalytic activity.

Its subcellular location is the lysosome. The catalysed reaction is a sterol ester + H2O = a sterol + a fatty acid + H(+). The enzyme catalyses cholesteryl (9Z-octadecenoate) + H2O = cholesterol + (9Z)-octadecenoate + H(+). It catalyses the reaction a triacylglycerol + H2O = a 1,2-diacylglycerol + a fatty acid + H(+). It carries out the reaction 1,2-di-(9Z-octadecenoyl)-glycerol + (9Z)-octadecenoate + H(+) = 1,2,3-tri-(9Z-octadecenoyl)-glycerol + H2O. The catalysed reaction is a 1,2-diacylglycerol + H2O = a 1-acylglycerol + a fatty acid + H(+). The enzyme catalyses 1,2-di-(9Z-octadecenoyl)-glycerol + H2O = 1-(9Z-octadecenoyl)-glycerol + (9Z)-octadecenoate + H(+). It catalyses the reaction a 1,3-diacylglycerol + H2O = a 1-acylglycerol + a fatty acid + H(+). It carries out the reaction 1,3-di-(9Z-octadecenoyl)-glycerol + H2O = 1-(9Z-octadecenoyl)-glycerol + (9Z)-octadecenoate + H(+). Catalyzes the deacylation of cholesteryl ester core lipids of endocytosed low density lipoproteins to generate free fatty acids and cholesterol. Hydrolyzes triglycerides (1,2,3-triacylglycerol) and diglycerides (such as 1,2-diacylglycerol and 1,3-diacylglycerol) with preference for the acyl moieties at the sn-1 or sn-3 positions. This chain is Lysosomal acid lipase/cholesteryl ester hydrolase (LIPA), found in Macaca fascicularis (Crab-eating macaque).